The chain runs to 34 residues: Small ribosomal subunit protein uS2c (34 aa).

This sequence belongs to the universal ribosomal protein uS2 family.

It localises to the plastid. The protein resides in the chloroplast. The polypeptide is Small ribosomal subunit protein uS2c (rps2) (Ochrosphaera neapolitana).